The chain runs to 559 residues: S-layer protein (559 aa).

The N-terminal stretch at 1–28 (MAMSLKKIGAIAVGGAMVASALASGVMA) is a signal peptide. N-linked (GlcNAc...) asparagine glycosylation is found at N108, N130, N155, N222, and N373.

This sequence belongs to the Mj S-layer protein family.

The protein resides in the secreted. The protein localises to the cell wall. It localises to the S-layer. Its function is as follows. S-layer protein. The S-layer is a paracrystalline mono-layered assembly of proteins which coat the surface of the cell. This is S-layer protein from Methanothermococcus thermolithotrophicus (Methanococcus thermolithotrophicus).